Consider the following 883-residue polypeptide: Bifunctional heparan sulfate N-deacetylase/N-sulfotransferase 2 (883 aa).

Residues 1–18 (MLQLWKVVRPARQLELHR) are Cytoplasmic-facing. The chain crosses the membrane as a helical; Signal-anchor for type II membrane protein span at residues 19–39 (LILLLIAFSLGSMGFLAYYVS). At 40-883 (TSPKAKEPLP…REELQHSSLG (844 aa)) the chain is on the lumenal side. Residues 41–597 (SPKAKEPLPL…KRHKDIWSKE (557 aa)) are heparan sulfate N-deacetylase 2. The interval 49 to 81 (PLPLGDCSSGGAAGPGPARPPVPPRPPRPPETA) is disordered. The segment covering 65–78 (PARPPVPPRPPRPP) has biased composition (pro residues). Residues asparagine 233, asparagine 350, and asparagine 400 are each glycosylated (N-linked (GlcNAc...) asparagine). Residues 598-883 (KTCDRLPKFL…REELQHSSLG (286 aa)) are heparan sulfate N-sulfotransferase 2. The active-site For sulfotransferase activity is the lysine 613. 613-617 (KTGTT) lines the 3'-phosphoadenylyl sulfate pocket. N-linked (GlcNAc...) asparagine glycosylation is present at asparagine 666. Serine 711 contributes to the 3'-phosphoadenylyl sulfate binding site. 2 N-linked (GlcNAc...) asparagine glycosylation sites follow: asparagine 726 and asparagine 802. The cysteines at positions 817 and 827 are disulfide-linked. A 3'-phosphoadenylyl sulfate-binding site is contributed by 832 to 836 (KGRRY).

This sequence belongs to the sulfotransferase 1 family. NDST subfamily. In terms of assembly, monomer.

It is found in the golgi apparatus membrane. The catalysed reaction is alpha-D-glucosaminyl-[heparan sulfate](n) + 3'-phosphoadenylyl sulfate = N-sulfo-alpha-D-glucosaminyl-[heparan sulfate](n) + adenosine 3',5'-bisphosphate + 2 H(+). It participates in glycan metabolism; heparan sulfate biosynthesis. Its pathway is glycan metabolism; heparin biosynthesis. Its function is as follows. Essential bifunctional enzyme that catalyzes both the N-deacetylation and the N-sulfation of glucosamine (GlcNAc) of the glycosaminoglycan in heparan sulfate. Modifies the GlcNAc-GlcA disaccharide repeating sugar backbone to make N-sulfated heparosan, a prerequisite substrate for later modifications in heparin biosynthesis. Plays a role in determining the extent and pattern of sulfation of heparan sulfate. Required for the exosomal release of SDCBP, CD63 and syndecan. This chain is Bifunctional heparan sulfate N-deacetylase/N-sulfotransferase 2 (NDST2), found in Homo sapiens (Human).